A 141-amino-acid polypeptide reads, in one-letter code: Protein MGF 100-2L (141 aa).

It belongs to the asfivirus MGF 100 family.

Plays a role in virus cell tropism, and may be required for efficient virus replication in macrophages. The polypeptide is Protein MGF 100-2L (African swine fever virus (isolate Tick/Malawi/Lil 20-1/1983) (ASFV)).